A 210-amino-acid polypeptide reads, in one-letter code: Thymidylate kinase (210 aa).

9–16 (GPEGAGKT) is an ATP binding site.

It belongs to the thymidylate kinase family.

It carries out the reaction dTMP + ATP = dTDP + ADP. Functionally, phosphorylation of dTMP to form dTDP in both de novo and salvage pathways of dTTP synthesis. The chain is Thymidylate kinase from Thermomicrobium roseum (strain ATCC 27502 / DSM 5159 / P-2).